Reading from the N-terminus, the 690-residue chain is F-box/LRR-repeat protein 5 (690 aa).

The segment at 1-159 (MAPFPDEVDV…IKKKVIAQHC (159 aa)) is hemerythrin-like. Positions 15, 57, 58, 61, 80, 126, and 130 each coordinate Fe(3+). The region spanning 202 to 248 (STGITHLPPEVMLSIFSYLNPQELCRCSQVSTKWSQLAKTGSLWKHL) is the F-box domain. LRR repeat units lie at residues 340–364 (SSAVSSKMVRQILELCPNLEHLDLT), 365–392 (QTDISDSAFDSWSWLGCCQSLRHLDLSG), 393–418 (CEKITDMALEKISRALGVLTSHQSGF), 478–507 (VWMLDAEDLADIEDAVEWRHRNVESLCVME), 575–606 (TTLPRGKDLIYFGSEKSDQETGRVLLFLSLSG), 607–634 (CYQITDHGLRALTLGGGLPYLEHLNLSG), and 635–660 (CLTVTGAGLQDLVSACPSLNDEYFYY). The [2Fe-2S] cluster site is built by C661, C675, C685, and C686.

As to quaternary structure, part of a SCF (SKP1-cullin-F-box) protein ligase complex. Interacts with ACO1/IRP1, IREB2/IRP2; the interaction depends on the [2Fe-2S] cluster. Interacts with DCTN1/p150-glued. Requires [2Fe-2S] cluster as cofactor. Post-translationally, polybiquitinated upon iron and oxygen depletion, leading to its degradation by the proteasome. Ubiquitination is regulated by the hemerythrin-like region that acts as an oxygen and iron sensor. Undergoes constitutive ubiquitin-dependent degradation at the steady state by HERC2. In terms of tissue distribution, ubiquitously expressed. Highly expressed in early embryogenesis with expression decreasing as the embryo progresses through development (E11 and E15).

Its subcellular location is the cytoplasm. The protein resides in the perinuclear region. The protein localises to the nucleus. The protein operates within protein modification; protein ubiquitination. An iron-sulfur cluster promotes IRP2 polyubiquitination and degradation in response to both iron and oxygen concentrations. Its function is as follows. Component of some SCF (SKP1-cullin-F-box) protein ligase complex that plays a central role in iron homeostasis by promoting the ubiquitination and subsequent degradation of IREB2/IRP2. The C-terminal domain of FBXL5 contains a redox-sensitive [2Fe-2S] cluster that, upon oxidation, promotes binding to IRP2 to effect its oxygen-dependent degradation. Under iron deficiency conditions, the N-terminal hemerythrin-like (Hr) region, which contains a diiron metal center, cannot bind iron and undergoes conformational changes that destabilize the FBXL5 protein and cause its ubiquitination and degradation. When intracellular iron levels start rising, the Hr region is stabilized. Additional increases in iron levels facilitate the assembly and incorporation of a redox active [2Fe-2S] cluster in the C-terminal domain. Only when oxygen level is high enough to maintain the cluster in its oxidized state can FBXL5 recruit IRP2 as a substrate for polyubiquination and degradation. Promotes ubiquitination and subsequent degradation of the dynactin complex component DCTN1. Within the nucleus, promotes the ubiquitination of SNAI1; preventing its interaction with DNA and promoting its degradation. Negatively regulates DNA damage response by mediating the ubiquitin-proteasome degradation of the DNA repair protein NABP2. This chain is F-box/LRR-repeat protein 5 (Fbxl5), found in Mus musculus (Mouse).